We begin with the raw amino-acid sequence, 164 residues long: Lipoprotein signal peptidase (164 aa).

Helical transmembrane passes span 11–31, 41–61, 64–84, and 92–112; these read YWVL…AVLS, VIPS…FSFL, QGGW…AYLV, and FAAL…GNVI. Residues aspartate 122 and aspartate 140 contribute to the active site. Residues 132 to 152 form a helical membrane-spanning segment; sequence FYPAFNIADSFICVGAVLAVL.

The protein belongs to the peptidase A8 family.

It is found in the cell inner membrane. It carries out the reaction Release of signal peptides from bacterial membrane prolipoproteins. Hydrolyzes -Xaa-Yaa-Zaa-|-(S,diacylglyceryl)Cys-, in which Xaa is hydrophobic (preferably Leu), and Yaa (Ala or Ser) and Zaa (Gly or Ala) have small, neutral side chains.. It participates in protein modification; lipoprotein biosynthesis (signal peptide cleavage). This protein specifically catalyzes the removal of signal peptides from prolipoproteins. The chain is Lipoprotein signal peptidase from Neisseria gonorrhoeae (strain ATCC 700825 / FA 1090).